Here is a 500-residue protein sequence, read N- to C-terminus: Glycerol kinase (500 aa).

Threonine 12 lines the ADP pocket. Residues threonine 12, threonine 13, and serine 14 each contribute to the ATP site. Residue threonine 12 participates in sn-glycerol 3-phosphate binding. Arginine 16 serves as a coordination point for ADP. Positions 82, 83, 134, and 244 each coordinate sn-glycerol 3-phosphate. Residues arginine 82, glutamate 83, tyrosine 134, aspartate 244, and glutamine 245 each coordinate glycerol. Residues threonine 266 and glycine 309 each coordinate ADP. The ATP site is built by threonine 266, glycine 309, glutamine 313, and glycine 410. The ADP site is built by glycine 410 and asparagine 414.

Belongs to the FGGY kinase family. Homotetramer and homodimer (in equilibrium).

The catalysed reaction is glycerol + ATP = sn-glycerol 3-phosphate + ADP + H(+). It participates in polyol metabolism; glycerol degradation via glycerol kinase pathway; sn-glycerol 3-phosphate from glycerol: step 1/1. Its activity is regulated as follows. Activated by phosphorylation and inhibited by fructose 1,6-bisphosphate (FBP). Functionally, key enzyme in the regulation of glycerol uptake and metabolism. Catalyzes the phosphorylation of glycerol to yield sn-glycerol 3-phosphate. The protein is Glycerol kinase of Alkaliphilus metalliredigens (strain QYMF).